A 317-amino-acid chain; its full sequence is Ribose-phosphate pyrophosphokinase (317 aa).

Residues 43–45 and 102–103 each bind ATP; these read DGE and RQ. Residues histidine 136 and aspartate 175 each contribute to the Mg(2+) site. Residue lysine 198 is part of the active site. D-ribose 5-phosphate is bound by residues arginine 200, aspartate 224, and 228-232; that span reads DTAGT.

It belongs to the ribose-phosphate pyrophosphokinase family. Class I subfamily. Homohexamer. It depends on Mg(2+) as a cofactor.

The protein resides in the cytoplasm. The enzyme catalyses D-ribose 5-phosphate + ATP = 5-phospho-alpha-D-ribose 1-diphosphate + AMP + H(+). Its pathway is metabolic intermediate biosynthesis; 5-phospho-alpha-D-ribose 1-diphosphate biosynthesis; 5-phospho-alpha-D-ribose 1-diphosphate from D-ribose 5-phosphate (route I): step 1/1. In terms of biological role, involved in the biosynthesis of the central metabolite phospho-alpha-D-ribosyl-1-pyrophosphate (PRPP) via the transfer of pyrophosphoryl group from ATP to 1-hydroxyl of ribose-5-phosphate (Rib-5-P). This chain is Ribose-phosphate pyrophosphokinase, found in Oceanobacillus iheyensis (strain DSM 14371 / CIP 107618 / JCM 11309 / KCTC 3954 / HTE831).